The following is a 139-amino-acid chain: Cystatin-11 (139 aa).

An N-terminal signal peptide occupies residues 1-28 (MMARLWKTTWFLLAILVALVAFSYQVKR). Intrachain disulfides connect Cys94/Cys102 and Cys115/Cys135. N-linked (GlcNAc...) asparagine glycosylation occurs at Asn134.

The protein belongs to the cystatin family.

It localises to the secreted. Has antibacterial activity against the Gram-negative bacteria E.coli. May play a role in sperm maturation and fertilization. This chain is Cystatin-11 (Cst11), found in Rattus norvegicus (Rat).